The chain runs to 155 residues: MNPRRKKRLLITSLLAVALSLAVGLVLFALQQNIDLFYTPTEIIEGKKETGIKPEVGQRLRIGGMVVQGSVKRNPESLKVSFDLVDNGGGIVTVFFDGILPDLFREGQGIVAQGNLLNATEINASEVLAKHDEEYMPPEVSEALVGMDNFKANNK.

At 1-8 the chain is on the cytoplasmic side; sequence MNPRRKKR. Residues 9-29 traverse the membrane as a helical; Signal-anchor for type II membrane protein segment; that stretch reads LLITSLLAVALSLAVGLVLFA. At 30–155 the chain is on the periplasmic side; the sequence is LQQNIDLFYT…GMDNFKANNK (126 aa). The heme site is built by His-131 and Tyr-135.

Belongs to the CcmE/CycJ family.

It is found in the cell inner membrane. Functionally, heme chaperone required for the biogenesis of c-type cytochromes. Transiently binds heme delivered by CcmC and transfers the heme to apo-cytochromes in a process facilitated by CcmF and CcmH. The chain is Cytochrome c-type biogenesis protein CcmE from Psychromonas ingrahamii (strain DSM 17664 / CCUG 51855 / 37).